Here is a 332-residue protein sequence, read N- to C-terminus: BRISC and BRCA1-A complex member 1 (332 aa).

An N-acetylmethionine modification is found at M1. A disordered region spans residues 1 to 88; the sequence is MEVAEPSCPT…PPPAPEVQVR (88 aa). Positions 10-23 are enriched in acidic residues; that stretch reads TEEEEEEEEEEEQS. S32, S52, and S60 each carry phosphoserine. A compositionally biased stretch (pro residues) spans 70-83; sequence GAGPKPWQVPPPAP. The segment at 98–301 is VWFA-like; sequence VIICLDLSEE…LELHNCMAKL (204 aa).

It belongs to the BABAM1 family. In terms of assembly, component of the ARISC complex, at least composed of UIMC1/RAP80, ABRAXAS1, BRCC3/BRCC36, BABAM2 and BABAM1/NBA1. Component of the BRCA1-A complex, at least composed of BRCA1, BARD1, UIMC1/RAP80, ABRAXAS1, BRCC3/BRCC36, BABAM2 and BABAM1/NBA1. In the BRCA1-A complex, interacts directly with ABRAXAS1 and BABAM2. Component of the BRISC complex, at least composed of ABRAXAS2, BRCC3/BRCC36, BABAM2 and BABAM1/NBA1. Identified in a complex with SHMT2 and the other subunits of the BRISC complex.

The protein localises to the cytoplasm. Its subcellular location is the nucleus. Functionally, component of the BRCA1-A complex, a complex that specifically recognizes 'Lys-63'-linked ubiquitinated histones H2A and H2AX at DNA lesions sites, leading to target the BRCA1-BARD1 heterodimer to sites of DNA damage at double-strand breaks (DSBs). The BRCA1-A complex also possesses deubiquitinase activity that specifically removes 'Lys-63'-linked ubiquitin on histones H2A and H2AX. In the BRCA1-A complex, it is required for the complex integrity and its localization at DSBs. Component of the BRISC complex, a multiprotein complex that specifically cleaves 'Lys-63'-linked ubiquitin in various substrates. In these 2 complexes, it is probably required to maintain the stability of BABAM2 and help the 'Lys-63'-linked deubiquitinase activity mediated by BRCC3/BRCC36 component. The BRISC complex is required for normal mitotic spindle assembly and microtubule attachment to kinetochores via its role in deubiquitinating NUMA1. Plays a role in interferon signaling via its role in the deubiquitination of the interferon receptor IFNAR1; deubiquitination increases IFNAR1 activity by enhancing its stability and cell surface expression. Down-regulates the response to bacterial lipopolysaccharide (LPS) via its role in IFNAR1 deubiquitination. The chain is BRISC and BRCA1-A complex member 1 (BABAM1) from Bos taurus (Bovine).